The primary structure comprises 430 residues: DNA damage-inducible protein DIN7 (430 aa).

The interval 1 to 96 (MGIPGLLPQL…HTETRRRKKR (96 aa)) is N-domain. 7 residues coordinate Mg(2+): Asp-30, Asp-78, Glu-150, Asp-152, Asp-171, Asp-173, and Asp-227. An I-domain region spans residues 114-247 (NAMEYFQKSV…VTAMKIVKRY (134 aa)).

This sequence belongs to the XPG/RAD2 endonuclease family. Mg(2+) is required as a cofactor.

It localises to the nucleus. Functionally, 5'-&gt;3' double-stranded DNA exonuclease. This chain is DNA damage-inducible protein DIN7 (DIN7), found in Saccharomyces cerevisiae (strain ATCC 204508 / S288c) (Baker's yeast).